Reading from the N-terminus, the 250-residue chain is NADH-quinone oxidoreductase subunit C (250 aa).

This sequence belongs to the complex I 30 kDa subunit family. NDH-1 is composed of 14 different subunits. Subunits NuoB, C, D, E, F, and G constitute the peripheral sector of the complex.

It is found in the cell inner membrane. The enzyme catalyses a quinone + NADH + 5 H(+)(in) = a quinol + NAD(+) + 4 H(+)(out). NDH-1 shuttles electrons from NADH, via FMN and iron-sulfur (Fe-S) centers, to quinones in the respiratory chain. The immediate electron acceptor for the enzyme in this species is believed to be ubiquinone. Couples the redox reaction to proton translocation (for every two electrons transferred, four hydrogen ions are translocated across the cytoplasmic membrane), and thus conserves the redox energy in a proton gradient. The chain is NADH-quinone oxidoreductase subunit C from Xanthomonas campestris pv. campestris (strain 8004).